Here is a 124-residue protein sequence, read N- to C-terminus: uncharacterized protein (124 aa).

Positions 42–118 constitute a GIY-YIG domain; it reads DKGGIFMFYN…INTQHSKYNI (77 aa).

This is an uncharacterized protein from Bacillus subtilis (strain 168).